The following is a 477-amino-acid chain: Bifunctional protein HldE (477 aa).

The ribokinase stretch occupies residues 1–318 (MKVTLPEFER…ENAVRGRADT (318 aa)). Lysine 179 carries the N6-acetyllysine modification. 195–198 (NLSE) provides a ligand contact to ATP. Aspartate 264 is an active-site residue. Residues 344 to 477 (MTNGVFDILH…IKKIQQDKKG (134 aa)) are cytidylyltransferase.

It in the N-terminal section; belongs to the carbohydrate kinase PfkB family. The protein in the C-terminal section; belongs to the cytidylyltransferase family. In terms of assembly, homodimer.

The catalysed reaction is D-glycero-beta-D-manno-heptose 7-phosphate + ATP = D-glycero-beta-D-manno-heptose 1,7-bisphosphate + ADP + H(+). The enzyme catalyses D-glycero-beta-D-manno-heptose 1-phosphate + ATP + H(+) = ADP-D-glycero-beta-D-manno-heptose + diphosphate. It functions in the pathway nucleotide-sugar biosynthesis; ADP-L-glycero-beta-D-manno-heptose biosynthesis; ADP-L-glycero-beta-D-manno-heptose from D-glycero-beta-D-manno-heptose 7-phosphate: step 1/4. It participates in nucleotide-sugar biosynthesis; ADP-L-glycero-beta-D-manno-heptose biosynthesis; ADP-L-glycero-beta-D-manno-heptose from D-glycero-beta-D-manno-heptose 7-phosphate: step 3/4. Catalyzes the phosphorylation of D-glycero-D-manno-heptose 7-phosphate at the C-1 position to selectively form D-glycero-beta-D-manno-heptose-1,7-bisphosphate. In terms of biological role, catalyzes the ADP transfer from ATP to D-glycero-beta-D-manno-heptose 1-phosphate, yielding ADP-D-glycero-beta-D-manno-heptose. This Escherichia coli O9:H4 (strain HS) protein is Bifunctional protein HldE.